The following is a 259-amino-acid chain: Type III pantothenate kinase (259 aa).

6 to 13 is an ATP binding site; that stretch reads DVGNTNIV. Substrate-binding positions include Tyr-100 and 107–110; that span reads GADR. The Proton acceptor role is filled by Asp-109. Asp-129 serves as a coordination point for K(+). Position 132 (Thr-132) interacts with ATP. Thr-184 serves as a coordination point for substrate.

This sequence belongs to the type III pantothenate kinase family. As to quaternary structure, homodimer. Requires NH4(+) as cofactor. It depends on K(+) as a cofactor.

It localises to the cytoplasm. It carries out the reaction (R)-pantothenate + ATP = (R)-4'-phosphopantothenate + ADP + H(+). Its pathway is cofactor biosynthesis; coenzyme A biosynthesis; CoA from (R)-pantothenate: step 1/5. Catalyzes the phosphorylation of pantothenate (Pan), the first step in CoA biosynthesis. This Clostridium perfringens (strain 13 / Type A) protein is Type III pantothenate kinase.